A 169-amino-acid chain; its full sequence is Sec-independent protein translocase protein TatB (169 aa).

A helical membrane pass occupies residues 1–21 (MFDIGFLELAVIAVIGLIVIG). The segment at 98 to 169 (EAEEAKLQTP…TTKTEPANDR (72 aa)) is disordered. Basic and acidic residues predominate over residues 134 to 143 (PPEEPSKVEA). Residues 146 to 169 (SAETPQANNQDQQPTTKTEPANDR) are compositionally biased toward polar residues.

It belongs to the TatB family. The Tat system comprises two distinct complexes: a TatABC complex, containing multiple copies of TatA, TatB and TatC subunits, and a separate TatA complex, containing only TatA subunits. Substrates initially bind to the TatABC complex, which probably triggers association of the separate TatA complex to form the active translocon.

The protein localises to the cell inner membrane. In terms of biological role, part of the twin-arginine translocation (Tat) system that transports large folded proteins containing a characteristic twin-arginine motif in their signal peptide across membranes. Together with TatC, TatB is part of a receptor directly interacting with Tat signal peptides. TatB may form an oligomeric binding site that transiently accommodates folded Tat precursor proteins before their translocation. The polypeptide is Sec-independent protein translocase protein TatB (Saccharophagus degradans (strain 2-40 / ATCC 43961 / DSM 17024)).